A 632-amino-acid polypeptide reads, in one-letter code: 1-deoxy-D-xylulose-5-phosphate synthase (632 aa).

Residues His-73 and 114–116 (SHA) contribute to the thiamine diphosphate site. Asp-146 contributes to the Mg(2+) binding site. Residues 147–148 (GA), Asn-176, Tyr-287, and Glu-368 each bind thiamine diphosphate. A Mg(2+)-binding site is contributed by Asn-176.

It belongs to the transketolase family. DXPS subfamily. In terms of assembly, homodimer. It depends on Mg(2+) as a cofactor. Thiamine diphosphate serves as cofactor.

It catalyses the reaction D-glyceraldehyde 3-phosphate + pyruvate + H(+) = 1-deoxy-D-xylulose 5-phosphate + CO2. It participates in metabolic intermediate biosynthesis; 1-deoxy-D-xylulose 5-phosphate biosynthesis; 1-deoxy-D-xylulose 5-phosphate from D-glyceraldehyde 3-phosphate and pyruvate: step 1/1. Catalyzes the acyloin condensation reaction between C atoms 2 and 3 of pyruvate and glyceraldehyde 3-phosphate to yield 1-deoxy-D-xylulose-5-phosphate (DXP). This chain is 1-deoxy-D-xylulose-5-phosphate synthase, found in Corynebacterium glutamicum (strain R).